The primary structure comprises 269 residues: Tryptophan synthase alpha chain (269 aa).

Active-site proton acceptor residues include Glu49 and Asp60.

Belongs to the TrpA family. Tetramer of two alpha and two beta chains.

It catalyses the reaction (1S,2R)-1-C-(indol-3-yl)glycerol 3-phosphate + L-serine = D-glyceraldehyde 3-phosphate + L-tryptophan + H2O. It participates in amino-acid biosynthesis; L-tryptophan biosynthesis; L-tryptophan from chorismate: step 5/5. The alpha subunit is responsible for the aldol cleavage of indoleglycerol phosphate to indole and glyceraldehyde 3-phosphate. This chain is Tryptophan synthase alpha chain, found in Pseudomonas putida (Arthrobacter siderocapsulatus).